A 399-amino-acid chain; its full sequence is MDKIIEKILTFSDPYIALDERVVIKKNEIIVDGNHFPYTKPAIIAVGKASYKMAKFFIDKLKDVKGLVILPKGSYISLPKVEVIESTHPDISELSFKAGTEVIKFLKNEDYDLLIFLLSGGASALMEYSNVPYEILRDINEKLVKSGLSVNEINIVRKHLSLIKGGKLTEFSKAPILTLIVSDVPGGDLSAVGSGPTLPDSSTVDDAKLILNKVGLGEYSKYLIETKKEVHNSFNFLILDINIVLRKLRDIVQNPIILSSEIRGDAYSFGQNLAGIVNTSFSNLGLKPPYTLLAGGEPDVKIEGKAGKGGRNGEVCLGFLKWVKRNSNHRFKLYAIATDGIDGNSEYAGCIVDENTIVDNIEYYIYSHSSYEALEKVGRVIKTGYTFTNVNNVYVLEVT.

A substrate-binding site is contributed by lysine 48.

It belongs to the glycerate kinase type-1 family. As to quaternary structure, homodimer. Requires Mg(2+) as cofactor. Ni(2+) serves as cofactor. It depends on Mn(2+) as a cofactor. The cofactor is Co(2+). Ca(2+) is required as a cofactor. Requires Zn(2+) as cofactor. Sr(2+) serves as cofactor.

It carries out the reaction (R)-glycerate + ATP = (2R)-2-phosphoglycerate + ADP + H(+). Catalyzes the ATP-dependent phosphorylation of D-glycerate to 2-phosphoglycerate. It can also utilize GTP, CTP, UTP, ADP, AMP or pyrophosphate as phosphate donor. The polypeptide is Glycerate 2-kinase (gck) (Sulfurisphaera tokodaii (strain DSM 16993 / JCM 10545 / NBRC 100140 / 7) (Sulfolobus tokodaii)).